A 621-amino-acid polypeptide reads, in one-letter code: UvrABC system protein C (621 aa).

The 80-residue stretch at 13 to 92 (EKPGVYLMKN…IKKYRPRYNI (80 aa)) folds into the GIY-YIG domain. Residues 204–239 (NEVINDLKIKMEKASSELKFEEAASFRDKLLAVEKI) form the UVR domain.

The protein belongs to the UvrC family. As to quaternary structure, interacts with UvrB in an incision complex.

It localises to the cytoplasm. Its function is as follows. The UvrABC repair system catalyzes the recognition and processing of DNA lesions. UvrC both incises the 5' and 3' sides of the lesion. The N-terminal half is responsible for the 3' incision and the C-terminal half is responsible for the 5' incision. This chain is UvrABC system protein C, found in Clostridium novyi (strain NT).